The sequence spans 120 residues: NAD(P)H-quinone oxidoreductase subunit 3 (120 aa).

A run of 3 helical transmembrane segments spans residues 7-27 (YEYFLGFLLACSLVPILSLTA), 64-84 (MFALVFVVFDVETVFLYPWAV), and 89-109 (LGLLAFVEALIFIAILVVALV).

It belongs to the complex I subunit 3 family. In terms of assembly, NDH-1 can be composed of about 15 different subunits; different subcomplexes with different compositions have been identified which probably have different functions.

It is found in the cellular thylakoid membrane. It carries out the reaction a plastoquinone + NADH + (n+1) H(+)(in) = a plastoquinol + NAD(+) + n H(+)(out). The catalysed reaction is a plastoquinone + NADPH + (n+1) H(+)(in) = a plastoquinol + NADP(+) + n H(+)(out). Functionally, NDH-1 shuttles electrons from an unknown electron donor, via FMN and iron-sulfur (Fe-S) centers, to quinones in the respiratory and/or the photosynthetic chain. The immediate electron acceptor for the enzyme in this species is believed to be plastoquinone. Couples the redox reaction to proton translocation, and thus conserves the redox energy in a proton gradient. Cyanobacterial NDH-1 also plays a role in inorganic carbon-concentration. This chain is NAD(P)H-quinone oxidoreductase subunit 3, found in Microcystis aeruginosa (strain NIES-843 / IAM M-2473).